A 422-amino-acid chain; its full sequence is COUP transcription factor 1 (422 aa).

The tract at residues Met1–Gln80 is disordered. Positions Glu39–Gln66 are enriched in low complexity. The segment at residues His82–Arg157 is a DNA-binding region (nuclear receptor). NR C4-type zinc fingers lie at residues Cys85–Cys105 and Cys121–Cys145. An NR LBD domain is found at Tyr183–Gly409. The important for dimerization stretch occupies residues Leu343–Ser422.

The protein belongs to the nuclear hormone receptor family. NR2 subfamily. As to quaternary structure, binds DNA as dimer; homodimer and probable heterodimer with NR2F6. Interacts with GTF2B; this interaction is direct. Interacts with COPS2.

It localises to the nucleus. Its function is as follows. Coup (chicken ovalbumin upstream promoter) transcription factor binds to the ovalbumin promoter and, in conjunction with another protein (S300-II) stimulates initiation of transcription. Binds to both direct repeats and palindromes of the 5'-AGGTCA-3' motif. Represses transcriptional activity of LHCG. This is COUP transcription factor 1 (Nr2f1) from Mus musculus (Mouse).